Reading from the N-terminus, the 269-residue chain is Formamidopyrimidine-DNA glycosylase (269 aa).

Residue Pro2 is the Schiff-base intermediate with DNA of the active site. Residue Glu3 is the Proton donor of the active site. Lys57 serves as the catalytic Proton donor; for beta-elimination activity. DNA-binding residues include His90, Arg109, and Arg150. The FPG-type zinc-finger motif lies at 235-269; sequence QVYGRKGEPCRVCGTPVVATKHAQRATFYCRHCQK. The active-site Proton donor; for delta-elimination activity is the Arg259.

Belongs to the FPG family. In terms of assembly, monomer. Zn(2+) serves as cofactor.

It catalyses the reaction Hydrolysis of DNA containing ring-opened 7-methylguanine residues, releasing 2,6-diamino-4-hydroxy-5-(N-methyl)formamidopyrimidine.. The enzyme catalyses 2'-deoxyribonucleotide-(2'-deoxyribose 5'-phosphate)-2'-deoxyribonucleotide-DNA = a 3'-end 2'-deoxyribonucleotide-(2,3-dehydro-2,3-deoxyribose 5'-phosphate)-DNA + a 5'-end 5'-phospho-2'-deoxyribonucleoside-DNA + H(+). In terms of biological role, involved in base excision repair of DNA damaged by oxidation or by mutagenic agents. Acts as a DNA glycosylase that recognizes and removes damaged bases. Has a preference for oxidized purines, such as 7,8-dihydro-8-oxoguanine (8-oxoG). Has AP (apurinic/apyrimidinic) lyase activity and introduces nicks in the DNA strand. Cleaves the DNA backbone by beta-delta elimination to generate a single-strand break at the site of the removed base with both 3'- and 5'-phosphates. The sequence is that of Formamidopyrimidine-DNA glycosylase from Salmonella arizonae (strain ATCC BAA-731 / CDC346-86 / RSK2980).